The chain runs to 221 residues: MRTVYHQRLTELAGRLGEMCSLAGIAMKRATQALLEADIGAAEQVIRDHERIVAMRAQVEKEAFALLALQHPVAGELREIFSAVQIIADTERMGALAVHIAKITRREYPNQVLPEEVRNCFADMAKVAIALGDSARQVLVNRDPQEAAQLHDRDDAMDDLHRHLLSVLIDREWRHGVRVGVETALLGRFFERFADHAVEVGRRVIFMVTGVLPTEDEISTY.

It belongs to the PhoU family. Homodimer.

It is found in the cytoplasm. In terms of biological role, plays a role in the regulation of phosphate uptake. In this role, it may bind, possibly as a chaperone, to PhoR, PhoP or a PhoR-PhoP complex to promote dephosphorylation of phospho-PhoP, or inhibit formation of the PhoR-PhoP transitory complex. This Mycobacterium bovis (strain ATCC BAA-935 / AF2122/97) protein is Phosphate-specific transport system accessory protein PhoU homolog 1 (phoU1).